Here is a 488-residue protein sequence, read N- to C-terminus: Argininosuccinate lyase 2 (488 aa).

This sequence belongs to the lyase 1 family. Argininosuccinate lyase subfamily.

It is found in the cytoplasm. It carries out the reaction 2-(N(omega)-L-arginino)succinate = fumarate + L-arginine. Its pathway is amino-acid biosynthesis; L-arginine biosynthesis; L-arginine from L-ornithine and carbamoyl phosphate: step 3/3. The sequence is that of Argininosuccinate lyase 2 from Rhizobium meliloti (strain 1021) (Ensifer meliloti).